The chain runs to 352 residues: Protein-glutamate methylesterase/protein-glutamine glutaminase (352 aa).

The Response regulatory domain occupies 5–122 (RAIVIDDSAF…SLDIRNVEDE (118 aa)). Residue aspartate 56 is modified to 4-aspartylphosphate. A CheB-type methylesterase domain is found at 163–352 (RSIVSIGTST…IPSLIVKQLT (190 aa)). Active-site residues include serine 171, histidine 198, and aspartate 294.

The protein belongs to the CheB family. In terms of processing, phosphorylated by CheA. Phosphorylation of the N-terminal regulatory domain activates the methylesterase activity.

It is found in the cytoplasm. The catalysed reaction is [protein]-L-glutamate 5-O-methyl ester + H2O = L-glutamyl-[protein] + methanol + H(+). The enzyme catalyses L-glutaminyl-[protein] + H2O = L-glutamyl-[protein] + NH4(+). Its function is as follows. Involved in chemotaxis. Part of a chemotaxis signal transduction system that modulates chemotaxis in response to various stimuli. Catalyzes the demethylation of specific methylglutamate residues introduced into the chemoreceptors (methyl-accepting chemotaxis proteins or MCP) by CheR. Also mediates the irreversible deamidation of specific glutamine residues to glutamic acid. The sequence is that of Protein-glutamate methylesterase/protein-glutamine glutaminase from Oceanobacillus iheyensis (strain DSM 14371 / CIP 107618 / JCM 11309 / KCTC 3954 / HTE831).